The sequence spans 323 residues: Ribokinase (323 aa).

Residues 26–28 (MTD), 54–58 (GKGAN), and Glu155 contribute to the substrate site. Residues Asn200, 236 to 241 (TLGASG), and Thr257 contribute to the ATP site. K(+)-binding residues include Asp264 and Thr266. ATP-binding positions include 269–270 (GD) and Asn296. Asp270 is a substrate binding site. Asp270 functions as the Proton acceptor in the catalytic mechanism. K(+) contacts are provided by Ser302, Ala305, Gly307, and Ser311.

The protein belongs to the carbohydrate kinase PfkB family. Ribokinase subfamily. In terms of assembly, homodimer. Mg(2+) serves as cofactor.

It localises to the cytoplasm. The protein localises to the nucleus. The enzyme catalyses D-ribose + ATP = D-ribose 5-phosphate + ADP + H(+). It participates in carbohydrate metabolism; D-ribose degradation; D-ribose 5-phosphate from beta-D-ribopyranose: step 2/2. Activated by a monovalent cation that binds near, but not in, the active site. The most likely occupant of the site in vivo is potassium. Ion binding induces a conformational change that may alter substrate affinity. Competitively inhibited by phosphonoacetic acid, etidronate, 2-carboxethylphosphonic acid, N-(phosphonomethyl)glycine, N-(phosphonomethyl)iminodiacetic acid and clodronate. Functionally, catalyzes the phosphorylation of ribose at O-5 in a reaction requiring ATP and magnesium. The resulting D-ribose-5-phosphate can then be used either for sythesis of nucleotides, histidine, and tryptophan, or as a component of the pentose phosphate pathway. This Mus musculus (Mouse) protein is Ribokinase.